The primary structure comprises 184 residues: MKIIVCITGASGVIYAKRLLEVLKDRAEVNLIISNSAKKIIKEELDIDWKEIKKLATDYYENDDFFSPLASGSNKFDAVVVVPCSMKTLSAIANGYSANLIVRVCDIALKERRKLIIMPREMPFNSIHLENMLKLSNLGAIVMPPIPAFYNKPKNVNDIINFVVGRVLDILGIDNSLFKRWGTV.

FMN-binding positions include G9–S11, S34, S85–T88, and R120. Positions 150 and 166 each coordinate dimethylallyl phosphate.

It belongs to the UbiX/PAD1 family.

It carries out the reaction dimethylallyl phosphate + FMNH2 = prenylated FMNH2 + phosphate. In terms of biological role, flavin prenyltransferase that catalyzes the synthesis of the prenylated FMN cofactor (prenyl-FMN) for 4-hydroxy-3-polyprenylbenzoic acid decarboxylase UbiD. The prenyltransferase is metal-independent and links a dimethylallyl moiety from dimethylallyl monophosphate (DMAP) to the flavin N5 and C6 atoms of FMN. The sequence is that of Flavin prenyltransferase UbiX from Methanocaldococcus jannaschii (strain ATCC 43067 / DSM 2661 / JAL-1 / JCM 10045 / NBRC 100440) (Methanococcus jannaschii).